The chain runs to 55 residues: Large ribosomal subunit protein bL33 (55 aa).

This sequence belongs to the bacterial ribosomal protein bL33 family. Part of the 50S ribosomal subunit. Contacts protein L35.

Functionally, binds the 23S rRNA and the E site tRNA. This Deinococcus radiodurans (strain ATCC 13939 / DSM 20539 / JCM 16871 / CCUG 27074 / LMG 4051 / NBRC 15346 / NCIMB 9279 / VKM B-1422 / R1) protein is Large ribosomal subunit protein bL33 (rpmG).